The chain runs to 220 residues: Ribose-5-phosphate isomerase A (220 aa).

Residues 25 to 28 (TGST), 80 to 83 (DGAD), and 93 to 96 (KGGG) each bind substrate. E102 acts as the Proton acceptor in catalysis. Substrate is bound at residue K120.

This sequence belongs to the ribose 5-phosphate isomerase family. Homodimer.

It carries out the reaction aldehydo-D-ribose 5-phosphate = D-ribulose 5-phosphate. The protein operates within carbohydrate degradation; pentose phosphate pathway; D-ribose 5-phosphate from D-ribulose 5-phosphate (non-oxidative stage): step 1/1. In terms of biological role, catalyzes the reversible conversion of ribose-5-phosphate to ribulose 5-phosphate. The polypeptide is Ribose-5-phosphate isomerase A (Bacillus anthracis).